Consider the following 576-residue polypeptide: Quinone-reactive Ni/Fe-hydrogenase large chain (576 aa).

Ni(2+)-binding residues include Cys-62, Cys-65, Cys-547, and Cys-550.

This sequence belongs to the [NiFe]/[NiFeSe] hydrogenase large subunit family. In terms of assembly, heterodimer of a large and a small subunit. It depends on Ni(2+) as a cofactor.

Its subcellular location is the cell membrane. It catalyses the reaction H2 + a menaquinone = a menaquinol. Its function is as follows. This enzyme recycles the H(2) produced by nitrogenase to increase the production of ATP and to protect nitrogenase against inhibition or damage by O(2) under carbon- or phosphate-limited conditions. In Wolinella succinogenes (strain ATCC 29543 / DSM 1740 / CCUG 13145 / JCM 31913 / LMG 7466 / NCTC 11488 / FDC 602W) (Vibrio succinogenes), this protein is Quinone-reactive Ni/Fe-hydrogenase large chain (hydB).